Reading from the N-terminus, the 820-residue chain is Serine/threonine-protein phosphatase 4 regulatory subunit 3 (820 aa).

The WH1 domain occupies 1–100 (MSDTRRRVKV…DEIWEKICQV (100 aa)). Disordered stretches follow at residues 687–711 (EDEEEEGEAVVPPVEKTKTEDDFPE) and 750–820 (AANG…RLGS). Residues 701–711 (EKTKTEDDFPE) show a composition bias toward basic and acidic residues. Polar residues predominate over residues 750 to 761 (AANGANSTNSKS). Over residues 770-784 (SSNGSSSKNTSLTTT) the composition is skewed to low complexity. Residues 798-809 (YPDDEDEEEEED) are compositionally biased toward acidic residues.

This sequence belongs to the SMEK family. Serine/threonine-protein phosphatase 4 (PP4) occurs in different assemblies of the catalytic and one or more regulatory subunits.

Its function is as follows. Regulatory subunit of serine/threonine-protein phosphatase 4 (PP4). This is Serine/threonine-protein phosphatase 4 regulatory subunit 3 from Xenopus tropicalis (Western clawed frog).